Here is a 500-residue protein sequence, read N- to C-terminus: 7-alpha-hydroxycholest-4-en-3-one 12-alpha-hydroxylase (500 aa).

A helical transmembrane segment spans residues 4-24 (WCTVLGALLTVVGCLCLSLLL). A Phosphoserine modification is found at Ser-325. Cys-439 contributes to the heme binding site.

It belongs to the cytochrome P450 family. Heme serves as cofactor. As to expression, expressed in liver.

The protein localises to the endoplasmic reticulum membrane. The protein resides in the microsome membrane. It catalyses the reaction 7alpha-hydroxycholest-4-en-3-one + reduced [NADPH--hemoprotein reductase] + O2 = 7alpha,12alpha-dihydroxycholest-4-en-3-one + oxidized [NADPH--hemoprotein reductase] + H2O + H(+). It carries out the reaction 5beta-cholestane-3alpha,7alpha-diol + reduced [NADPH--hemoprotein reductase] + O2 = 5beta-cholestane-3alpha,7alpha,12alpha-triol + oxidized [NADPH--hemoprotein reductase] + H2O + H(+). The enzyme catalyses chenodeoxycholate + reduced [NADPH--hemoprotein reductase] + O2 = cholate + oxidized [NADPH--hemoprotein reductase] + H2O + H(+). It participates in lipid metabolism; bile acid biosynthesis. A cytochrome P450 monooxygenase involved in primary bile acid biosynthesis. Catalyzes the 12alpha-hydroxylation of 7alpha-hydroxy-4-cholesten-3-one, an intermediate metabolite in cholic acid biosynthesis. Controls biliary balance of cholic acid and chenodeoxycholic acid, ultimately regulating the intestinal absorption of dietary lipids. Mechanistically, uses molecular oxygen inserting one oxygen atom into a substrate, and reducing the second into a water molecule, with two electrons provided by NADPH via cytochrome P450 reductase (CPR; NADPH--hemoprotein reductase). The sequence is that of 7-alpha-hydroxycholest-4-en-3-one 12-alpha-hydroxylase (Cyp8b1) from Mus musculus (Mouse).